We begin with the raw amino-acid sequence, 1938 residues long: Myosin-1 (1938 aa).

The interval 1-27 (MSLEHEKDPGWQYLKRSREQQLADQSR) is disordered. Basic and acidic residues predominate over residues 16–27 (RSREQQLADQSR). In terms of domain architecture, Myosin N-terminal SH3-like spans 30–80 (DSKKNVWIPDAEEGYIEGVIKGPGPKADTVIVTAGGKDVTLKKDIVQEVNP). In terms of domain architecture, Myosin motor spans 84 to 785 (EKTEDMSNLT…VVAHIEDLRD (702 aa)). K128 is subject to N6,N6,N6-trimethyllysine. Position 177–184 (177–184 (GESGAGKT)) interacts with ATP. Actin-binding regions lie at residues 660–682 (LNKL…IPNE) and 764–778 (RIGH…GVVA). The tract at residues 846–1170 (QLKCGKMAEE…NKQLEIQQDN (325 aa)) is alpha-helical tailpiece (short S2). The interval 846–1938 (QLKCGKMAEE…GQVVRSATNK (1093 aa)) is rodlike tail (S2 and LMM domains). Residues 846-1938 (QLKCGKMAEE…GQVVRSATNK (1093 aa)) adopt a coiled-coil conformation. The tract at residues 919-951 (RQEVEKSLNDANDRLSEHEEKNADLEKQRRKAQ) is disordered. The segment covering 920 to 951 (QEVEKSLNDANDRLSEHEEKNADLEKQRRKAQ) has biased composition (basic and acidic residues). Residues 1171–1938 (NKKKDSEIIK…GQVVRSATNK (768 aa)) form a light meromyosin (LMM) region.

It belongs to the TRAFAC class myosin-kinesin ATPase superfamily. Myosin family. Muscle myosin is a hexameric protein that consists of 2 heavy chain subunits (MHC), 2 alkali light chain subunits (MLC) and 2 regulatory light chain subunits (MLC-2). Interacts with itr-1 (via c-terminal coiled coil domain). As to expression, found exclusively in the pharyngeal muscle.

Its subcellular location is the cytoplasm. It localises to the myofibril. Muscle contraction. This is Myosin-1 from Caenorhabditis elegans.